Consider the following 107-residue polypeptide: Ig kappa chain V region 4135 (107 aa).

The tract at residues alanine 1–cysteine 24 is framework-1. The complementarity-determining-1 stretch occupies residues glutamine 25–serine 35. Residues tryptophan 36 to tyrosine 50 form a framework-2 region. Residues arginine 51–serine 57 are complementarity-determining-2. A framework-3 region spans residues glycine 58–cysteine 89. Positions glutamine 90–glycine 96 are complementarity-determining-3. The tract at residues phenylalanine 97 to lysine 106 is framework-4.

The chain is Ig kappa chain V region 4135 from Oryctolagus cuniculus (Rabbit).